Consider the following 201-residue polypeptide: MAEPGFFNAMLIGALIFGYVLGSIPFGLILTRLAGLGDVRAIGSGNIGATNVLRTGNKKLAAATLILDALKGTAAALIAAHFGQNAAIAAGFGAFIGHLFPVWIGFKGGKGVATYLGVLIGLAWAGALVFAAAWIVTALLTRYSSPSALVASLIVPIALYSRGNQALAALFAIMTVIVFIKHRANISRLLNGTESKIGAKG.

The next 5 helical transmembrane spans lie at 10-30 (MLIGALIFGYVLGSIPFGLIL), 60-80 (LAAATLILDALKGTAAALIAA), 86-106 (AAIAAGFGAFIGHLFPVWIGF), 116-136 (LGVLIGLAWAGALVFAAAWIV), and 166-186 (ALAALFAIMTVIVFIKHRANI).

It belongs to the PlsY family. As to quaternary structure, probably interacts with PlsX.

Its subcellular location is the cell inner membrane. The catalysed reaction is an acyl phosphate + sn-glycerol 3-phosphate = a 1-acyl-sn-glycero-3-phosphate + phosphate. The protein operates within lipid metabolism; phospholipid metabolism. Functionally, catalyzes the transfer of an acyl group from acyl-phosphate (acyl-PO(4)) to glycerol-3-phosphate (G3P) to form lysophosphatidic acid (LPA). This enzyme utilizes acyl-phosphate as fatty acyl donor, but not acyl-CoA or acyl-ACP. This is Glycerol-3-phosphate acyltransferase from Brucella abortus (strain 2308).